A 238-amino-acid polypeptide reads, in one-letter code: MDISGAVKQKLLQFLGKQKKPELLATYLFYLEQALSLRPVVFVRDKIIFKTPEDAVRILEQDKKIWRETEIQISSEKPQVNENTKRIYICPFTGKVFADNVYANPQDAIYDWLSSCPQNMEKQGGVRIKRFLVSEDPDVIKEYAVPPKEPIIKTVFASAITGKLFHSLPPLLEDFISSYLRPMTLEEVQNQTKFQLESSFLSLLQDALVEDKIAAFIESLADDTAFHVYISQWVDTEE.

The protein belongs to the chlamydial CPn_0658/CT_538/TC_0825 family.

The protein is Protein CPn_0658/CP_0089/CPj0658/CpB0684 of Chlamydia pneumoniae (Chlamydophila pneumoniae).